The sequence spans 190 residues: NADH dehydrogenase [ubiquinone] iron-sulfur protein 3 (190 aa).

This sequence belongs to the complex I 30 kDa subunit family. Complex I is composed of about 45 different subunits. This is a component of the iron-sulfur (IP) fragment of the enzyme.

The protein localises to the mitochondrion inner membrane. It catalyses the reaction a ubiquinone + NADH + 5 H(+)(in) = a ubiquinol + NAD(+) + 4 H(+)(out). In terms of biological role, core subunit of the mitochondrial membrane respiratory chain NADH dehydrogenase (Complex I) that is believed to belong to the minimal assembly required for catalysis. Complex I functions in the transfer of electrons from NADH to the respiratory chain. The immediate electron acceptor for the enzyme is believed to be ubiquinone. The sequence is that of NADH dehydrogenase [ubiquinone] iron-sulfur protein 3 (NAD9) from Solanum tuberosum (Potato).